Here is a 443-residue protein sequence, read N- to C-terminus: Thymidine phosphorylase (443 aa).

Belongs to the thymidine/pyrimidine-nucleoside phosphorylase family. In terms of assembly, homodimer.

The enzyme catalyses thymidine + phosphate = 2-deoxy-alpha-D-ribose 1-phosphate + thymine. It functions in the pathway pyrimidine metabolism; dTMP biosynthesis via salvage pathway; dTMP from thymine: step 1/2. Its function is as follows. The enzymes which catalyze the reversible phosphorolysis of pyrimidine nucleosides are involved in the degradation of these compounds and in their utilization as carbon and energy sources, or in the rescue of pyrimidine bases for nucleotide synthesis. This is Thymidine phosphorylase from Shewanella baltica (strain OS223).